We begin with the raw amino-acid sequence, 67 residues long: ATP synthase protein 8 (67 aa).

Residues 8 to 24 form a helical membrane-spanning segment; sequence TWFITITSMTITLFIMF. Lys-54 bears the N6-acetyllysine; alternate mark. N6-succinyllysine; alternate is present on Lys-54. N6-acetyllysine is present on Lys-57.

It belongs to the ATPase protein 8 family. In terms of assembly, F-type ATPases have 2 components, CF(1) - the catalytic core - and CF(0) - the membrane proton channel. Component of an ATP synthase complex composed of ATP5PB, ATP5MC1, ATP5F1E, ATP5PD, ATP5ME, ATP5PF, ATP5MF, MT-ATP6, MT-ATP8, ATP5F1A, ATP5F1B, ATP5F1D, ATP5F1C, ATP5PO, ATP5MG, ATP5MK and ATP5MJ. Interacts with PRICKLE3.

It localises to the mitochondrion membrane. In terms of biological role, mitochondrial membrane ATP synthase (F(1)F(0) ATP synthase or Complex V) produces ATP from ADP in the presence of a proton gradient across the membrane which is generated by electron transport complexes of the respiratory chain. F-type ATPases consist of two structural domains, F(1) - containing the extramembraneous catalytic core and F(0) - containing the membrane proton channel, linked together by a central stalk and a peripheral stalk. During catalysis, ATP synthesis in the catalytic domain of F(1) is coupled via a rotary mechanism of the central stalk subunits to proton translocation. Part of the complex F(0) domain. Minor subunit located with subunit a in the membrane. This Rhinoceros unicornis (Greater Indian rhinoceros) protein is ATP synthase protein 8 (MT-ATP8).